A 340-amino-acid polypeptide reads, in one-letter code: N-acetyl-gamma-glutamyl-phosphate reductase (340 aa).

The active site involves Cys-146.

The protein belongs to the NAGSA dehydrogenase family. Type 1 subfamily.

It is found in the cytoplasm. It carries out the reaction N-acetyl-L-glutamate 5-semialdehyde + phosphate + NADP(+) = N-acetyl-L-glutamyl 5-phosphate + NADPH + H(+). It participates in amino-acid biosynthesis; L-arginine biosynthesis; N(2)-acetyl-L-ornithine from L-glutamate: step 3/4. In terms of biological role, catalyzes the NADPH-dependent reduction of N-acetyl-5-glutamyl phosphate to yield N-acetyl-L-glutamate 5-semialdehyde. The protein is N-acetyl-gamma-glutamyl-phosphate reductase of Rubrobacter xylanophilus (strain DSM 9941 / JCM 11954 / NBRC 16129 / PRD-1).